We begin with the raw amino-acid sequence, 1398 residues long: DNA-directed RNA polymerase subunit beta' (1398 aa).

Cysteine 73, cysteine 75, cysteine 88, and cysteine 91 together coordinate Zn(2+). Aspartate 464, aspartate 466, and aspartate 468 together coordinate Mg(2+). 4 residues coordinate Zn(2+): cysteine 823, cysteine 897, cysteine 904, and cysteine 907.

The protein belongs to the RNA polymerase beta' chain family. As to quaternary structure, the RNAP catalytic core consists of 2 alpha, 1 beta, 1 beta' and 1 omega subunit. When a sigma factor is associated with the core the holoenzyme is formed, which can initiate transcription. Mg(2+) serves as cofactor. Zn(2+) is required as a cofactor.

The enzyme catalyses RNA(n) + a ribonucleoside 5'-triphosphate = RNA(n+1) + diphosphate. In terms of biological role, DNA-dependent RNA polymerase catalyzes the transcription of DNA into RNA using the four ribonucleoside triphosphates as substrates. In Gluconacetobacter diazotrophicus (strain ATCC 49037 / DSM 5601 / CCUG 37298 / CIP 103539 / LMG 7603 / PAl5), this protein is DNA-directed RNA polymerase subunit beta'.